The following is a 344-amino-acid chain: MCTKMEQPFYHDDSYAAAGYGRSPGSLSLHDYKLLKPTLALNLADPYRGLKGPGARGPGPEGSGAGSYFSGQGSDTGASLKLASTELERLIVPNSNGVITTTPTPPGQYFYPRGGGSGGGTGGGVTEEQEGFADGFVKALDDLHKMNHVTPPNVSLGASGGPQAGPGGVYAGPEPPPVYTNLSSYSPASAPSGGSGTAVGTGSSYPTATISYLPHAPPFAGGHPAQLGLSRGASAFKEEPQTVPEARSRDATPPVSPINMEDQERIKVERKRLRNRLAATKCRKRKLERIARLEDKVKTLKAENAGLSSAAGLLREQVAQLKQKVMTHVSNGCQLLLGVKGHAF.

Residues Lys-4, Lys-33, and Lys-36 each participate in a glycyl lysine isopeptide (Lys-Gly) (interchain with G-Cter in SUMO2) cross-link. The span at 51–65 (KGPGARGPGPEGSGA) shows a compositional bias: gly residues. The interval 51-75 (KGPGARGPGPEGSGAGSYFSGQGSD) is disordered. Residue Lys-81 forms a Glycyl lysine isopeptide (Lys-Gly) (interchain with G-Cter in SUMO2) linkage. 2 positions are modified to phosphothreonine: Thr-102 and Thr-104. Residue Ser-117 is modified to Phosphoserine. Lys-138 is covalently cross-linked (Glycyl lysine isopeptide (Lys-Gly) (interchain with G-Cter in SUMO2)). 2 disordered regions span residues 181 to 202 (NLSSYSPASAPSGGSGTAVGTG) and 237 to 257 (KEEPQTVPEARSRDATPPVSP). Residues 183–192 (SSYSPASAPS) are compositionally biased toward low complexity. At Lys-237 the chain carries N6-acetyllysine; alternate. Lys-237 is covalently cross-linked (Glycyl lysine isopeptide (Lys-Gly) (interchain with G-Cter in SUMO1); alternate). Lys-237 participates in a covalent cross-link: Glycyl lysine isopeptide (Lys-Gly) (interchain with G-Cter in SUMO2); alternate. Over residues 237-250 (KEEPQTVPEARSRD) the composition is skewed to basic and acidic residues. Ser-248 carries the post-translational modification Phosphoserine. Thr-252 carries the post-translational modification Phosphothreonine. Ser-256 bears the Phosphoserine mark. A basic motif region spans residues 265–292 (RIKVERKRLRNRLAATKCRKRKLERIAR). Residues 265–328 (RIKVERKRLR…AQLKQKVMTH (64 aa)) form the bZIP domain. The interval 293–321 (LEDKVKTLKAENAGLSSAAGLLREQVAQL) is leucine-zipper. Lys-340 is covalently cross-linked (Glycyl lysine isopeptide (Lys-Gly) (interchain with G-Cter in SUMO2)).

It belongs to the bZIP family. Jun subfamily. As to quaternary structure, binds DNA as a homodimer or as a heterodimer with another member of the Jun/Fos family. Component of an AP-1 transcription factor complex composed of JUN-FOS heterodimers. As part of the AP-1 transcription factor complex, forms heterodimers with FOSB, thereby binding to the AP-1 consensus sequence and stimulating transcription. Interacts with NFE2 (via its WW domains). In terms of processing, ubiquitinated by ITCH, leading to its degradation.

The protein resides in the nucleus. Its function is as follows. Transcription factor involved in regulating gene activity following the primary growth factor response. Binds to the DNA sequence 5'-TGA[GC]TCA-3'. Heterodimerizes with proteins of the FOS family to form an AP-1 transcription complex, thereby enhancing its DNA binding activity to an AP-1 consensus sequence 5'-TGA[GC]TCA-3' and enhancing its transcriptional activity. The protein is Transcription factor JunB (Junb) of Mus musculus (Mouse).